The chain runs to 515 residues: Zinc metalloproteinase-disintegrin BA-5A (515 aa).

Residues 1–20 (MMQVLLVTICLAVFPYQGSS) form the signal peptide. The propeptide occupies 21-193 (IILESGNVND…KEASQLVATS (173 aa)). A Peptidase M12B domain is found at 203-399 (RYIKYFIVVD…YKPDCTLIRP (197 aa)). A glycan (N-linked (GlcNAc...) asparagine) is linked at N263. Disulfide bonds link C314–C394, C354–C378, C356–C361, C410–C429, C421–C439, C423–C434, C433–C456, C447–C453, C452–C478, C465–C485, and C472–C497. H339 contacts Zn(2+). E340 is a catalytic residue. Zn(2+) is bound by residues H343 and H349. The N-linked (GlcNAc...) asparagine glycan is linked to N377. The Disintegrin domain occupies 407 to 493 (PPVCGNDILE…DCPIDHFHRN (87 aa)). A D/ECD-tripeptide motif is present at residues 471 to 473 (ECD).

This sequence belongs to the venom metalloproteinase (M12B) family. P-II subfamily. As to quaternary structure, monomer. It depends on Zn(2+) as a cofactor. In terms of tissue distribution, expressed by the venom gland.

It is found in the secreted. Its function is as follows. Snake venom zinc metalloprotease that possesses hemorrhagic activity and degrades alpha chain of fibrinogen (FGA). May inhibit alpha-2/beta-1 integrin (ITGA2/ITGB1). The polypeptide is Zinc metalloproteinase-disintegrin BA-5A (Bitis arietans (African puff adder)).